The primary structure comprises 631 residues: 1-deoxy-D-xylulose-5-phosphate synthase (631 aa).

Residues His-72 and 113–115 each bind thiamine diphosphate; that span reads GHA. Asp-144 serves as a coordination point for Mg(2+). Residues 145–146, Asn-174, Tyr-287, and Glu-370 contribute to the thiamine diphosphate site; that span reads GA. Residue Asn-174 participates in Mg(2+) binding.

This sequence belongs to the transketolase family. DXPS subfamily. As to quaternary structure, homodimer. It depends on Mg(2+) as a cofactor. Thiamine diphosphate is required as a cofactor.

It carries out the reaction D-glyceraldehyde 3-phosphate + pyruvate + H(+) = 1-deoxy-D-xylulose 5-phosphate + CO2. The protein operates within metabolic intermediate biosynthesis; 1-deoxy-D-xylulose 5-phosphate biosynthesis; 1-deoxy-D-xylulose 5-phosphate from D-glyceraldehyde 3-phosphate and pyruvate: step 1/1. In terms of biological role, catalyzes the acyloin condensation reaction between C atoms 2 and 3 of pyruvate and glyceraldehyde 3-phosphate to yield 1-deoxy-D-xylulose-5-phosphate (DXP). This is 1-deoxy-D-xylulose-5-phosphate synthase from Prochlorococcus marinus (strain MIT 9515).